The chain runs to 121 residues: MARIAGVDLPNKHVNVSLTYIYGISTSSANKICEATKVDPMKKMNDLDEAELAAIREVIDREYKVEGRLRTEVALNIKRLQDIGCYRGQRHRKGLPVRGQRTRTNARTRKGKKKTVAGKKK.

The segment at 91-121 (HRKGLPVRGQRTRTNARTRKGKKKTVAGKKK) is disordered.

Belongs to the universal ribosomal protein uS13 family. As to quaternary structure, part of the 30S ribosomal subunit. Forms a loose heterodimer with protein S19. Forms two bridges to the 50S subunit in the 70S ribosome.

Its function is as follows. Located at the top of the head of the 30S subunit, it contacts several helices of the 16S rRNA. In the 70S ribosome it contacts the 23S rRNA (bridge B1a) and protein L5 of the 50S subunit (bridge B1b), connecting the 2 subunits; these bridges are implicated in subunit movement. Contacts the tRNAs in the A and P-sites. In Treponema denticola (strain ATCC 35405 / DSM 14222 / CIP 103919 / JCM 8153 / KCTC 15104), this protein is Small ribosomal subunit protein uS13.